Here is a 295-residue protein sequence, read N- to C-terminus: tRNA(Ile)-lysidine synthase (295 aa).

10–15 (SGGPDS) contributes to the ATP binding site.

It belongs to the tRNA(Ile)-lysidine synthase family.

The protein localises to the cytoplasm. The catalysed reaction is cytidine(34) in tRNA(Ile2) + L-lysine + ATP = lysidine(34) in tRNA(Ile2) + AMP + diphosphate + H(+). Its function is as follows. Ligates lysine onto the cytidine present at position 34 of the AUA codon-specific tRNA(Ile) that contains the anticodon CAU, in an ATP-dependent manner. Cytidine is converted to lysidine, thus changing the amino acid specificity of the tRNA from methionine to isoleucine. The chain is tRNA(Ile)-lysidine synthase from Malacoplasma penetrans (strain HF-2) (Mycoplasma penetrans).